A 361-amino-acid chain; its full sequence is Protein RecA (361 aa).

ATP is bound at residue 77–84; sequence GPESSGKT.

It belongs to the RecA family.

Its subcellular location is the cytoplasm. Its function is as follows. Can catalyze the hydrolysis of ATP in the presence of single-stranded DNA, the ATP-dependent uptake of single-stranded DNA by duplex DNA, and the ATP-dependent hybridization of homologous single-stranded DNAs. It interacts with LexA causing its activation and leading to its autocatalytic cleavage. This is Protein RecA from Brucella anthropi (strain ATCC 49188 / DSM 6882 / CCUG 24695 / JCM 21032 / LMG 3331 / NBRC 15819 / NCTC 12168 / Alc 37) (Ochrobactrum anthropi).